Reading from the N-terminus, the 214-residue chain is Large ribosomal subunit protein bL25 (214 aa).

The protein belongs to the bacterial ribosomal protein bL25 family. CTC subfamily. As to quaternary structure, part of the 50S ribosomal subunit; part of the 5S rRNA/L5/L18/L25 subcomplex. Contacts the 5S rRNA. Binds to the 5S rRNA independently of L5 and L18.

Functionally, this is one of the proteins that binds to the 5S RNA in the ribosome where it forms part of the central protuberance. The chain is Large ribosomal subunit protein bL25 from Polynucleobacter necessarius subsp. necessarius (strain STIR1).